A 130-amino-acid chain; its full sequence is Methylglyoxal synthase (130 aa).

In terms of domain architecture, MGS-like spans 1–130 (MSKPRIALIA…DLARNMQDVC (130 aa)). Residues His11, Lys15, 37 to 40 (TGTT), and 57 to 58 (SG) each bind substrate. The Proton donor/acceptor role is filled by Asp63. Residue His90 coordinates substrate.

Belongs to the methylglyoxal synthase family.

It carries out the reaction dihydroxyacetone phosphate = methylglyoxal + phosphate. Functionally, catalyzes the formation of methylglyoxal from dihydroxyacetone phosphate. This Burkholderia ambifaria (strain MC40-6) protein is Methylglyoxal synthase.